A 176-amino-acid chain; its full sequence is Probable chemoreceptor glutamine deamidase CheD (176 aa).

Belongs to the CheD family.

It carries out the reaction L-glutaminyl-[protein] + H2O = L-glutamyl-[protein] + NH4(+). Probably deamidates glutamine residues to glutamate on methyl-accepting chemotaxis receptors (MCPs), playing an important role in chemotaxis. This is Probable chemoreceptor glutamine deamidase CheD from Rhodospirillum rubrum (strain ATCC 11170 / ATH 1.1.1 / DSM 467 / LMG 4362 / NCIMB 8255 / S1).